The primary structure comprises 396 residues: Nitrate regulatory protein (396 aa).

One can recognise an NIT domain in the interval Gly-37–Leu-284. Positions Leu-323 to Leu-384 constitute an ANTAR domain.

Nitrate- and nitrite-responsive positive regulator for nasFEDCBA operon expression. NasR protein binds to the factor-independent terminator site located in the nasF operon leader RNA to effect transcription antitermination. This is Nitrate regulatory protein (nasR) from Klebsiella oxytoca.